Reading from the N-terminus, the 114-residue chain is Large ribosomal subunit protein bL20 (114 aa).

Belongs to the bacterial ribosomal protein bL20 family.

Binds directly to 23S ribosomal RNA and is necessary for the in vitro assembly process of the 50S ribosomal subunit. It is not involved in the protein synthesizing functions of that subunit. The protein is Large ribosomal subunit protein bL20 of Flavobacterium johnsoniae (strain ATCC 17061 / DSM 2064 / JCM 8514 / BCRC 14874 / CCUG 350202 / NBRC 14942 / NCIMB 11054 / UW101) (Cytophaga johnsonae).